The following is a 156-amino-acid chain: Transcription antitermination protein NusB (156 aa).

The protein belongs to the NusB family.

In terms of biological role, involved in transcription antitermination. Required for transcription of ribosomal RNA (rRNA) genes. Binds specifically to the boxA antiterminator sequence of the ribosomal RNA (rrn) operons. The protein is Transcription antitermination protein NusB of Rickettsia akari (strain Hartford).